Here is a 303-residue protein sequence, read N- to C-terminus: Methionyl-tRNA formyltransferase (303 aa).

111-114 (SLLP) serves as a coordination point for (6S)-5,6,7,8-tetrahydrofolate.

This sequence belongs to the Fmt family.

It carries out the reaction L-methionyl-tRNA(fMet) + (6R)-10-formyltetrahydrofolate = N-formyl-L-methionyl-tRNA(fMet) + (6S)-5,6,7,8-tetrahydrofolate + H(+). Its function is as follows. Attaches a formyl group to the free amino group of methionyl-tRNA(fMet). The formyl group appears to play a dual role in the initiator identity of N-formylmethionyl-tRNA by promoting its recognition by IF2 and preventing the misappropriation of this tRNA by the elongation apparatus. This is Methionyl-tRNA formyltransferase from Ehrlichia chaffeensis (strain ATCC CRL-10679 / Arkansas).